Consider the following 393-residue polypeptide: Branched-chain-amino-acid aminotransferase, mitochondrial (393 aa).

Residues 1-27 (MATAALRQIWIPRFLPVPWFLCGSRRY) constitute a mitochondrion transit peptide. Substrate is bound at residue Y169. Residue K230 is modified to N6-(pyridoxal phosphate)lysine. Residue K322 is modified to N6-acetyllysine.

Belongs to the class-IV pyridoxal-phosphate-dependent aminotransferase family. In terms of assembly, homodimer. It depends on pyridoxal 5'-phosphate as a cofactor.

It localises to the mitochondrion. It catalyses the reaction L-leucine + 2-oxoglutarate = 4-methyl-2-oxopentanoate + L-glutamate. The catalysed reaction is L-isoleucine + 2-oxoglutarate = (S)-3-methyl-2-oxopentanoate + L-glutamate. It carries out the reaction L-valine + 2-oxoglutarate = 3-methyl-2-oxobutanoate + L-glutamate. Functionally, catalyzes the first reaction in the catabolism of the essential branched chain amino acids leucine, isoleucine, and valine. May also function as a transporter of branched chain alpha-keto acids. This chain is Branched-chain-amino-acid aminotransferase, mitochondrial (BCAT2), found in Bos taurus (Bovine).